We begin with the raw amino-acid sequence, 658 residues long: Integrator complex subunit 9 (658 aa).

1D-myo-inositol hexakisphosphate contacts are provided by K2 and F19. Residue K58 forms a Glycyl lysine isopeptide (Lys-Gly) (interchain with G-Cter in SUMO2) linkage. Residues K510 and R511 each contribute to the 1D-myo-inositol hexakisphosphate site. A disordered region spans residues 548–574 (DNKHLLQPPPRPAQPTSGKKRKRVSDD). The Nuclear localization signal signature appears at 566–570 (KKRKR).

This sequence belongs to the metallo-beta-lactamase superfamily. RNA-metabolizing metallo-beta-lactamase-like family. INTS9 subfamily. Component of the Integrator complex, composed of core subunits INTS1, INTS2, INTS3, INTS4, INTS5, INTS6, INTS7, INTS8, INTS9/RC74, INTS10, INTS11/CPSF3L, INTS12, INTS13, INTS14 and INTS15. The core complex associates with protein phosphatase 2A subunits PPP2CA and PPP2R1A, to form the Integrator-PP2A (INTAC) complex. INTS9 is part of the RNA endonuclease subcomplex, composed of INTS4, INTS9, INTS11 and inositol hexakisphosphate (InsP6). Interacts with WDR73; interaction is required for the assembly of the RNA endonuclease subcomplex in the cytoplasm. Interacts with BRAT1; interaction is required for the assembly of the RNA endonuclease subcomplex. Interacts with ESRRB, ESRRB is not a core component of the Integrator complex and this association is a bridge for the interaction with the multiprotein complex Integrator; attracts the transcriptional machinery.

Its subcellular location is the nucleus. The protein localises to the cytoplasm. In terms of biological role, component of the integrator complex, a multiprotein complex that terminates RNA polymerase II (Pol II) transcription in the promoter-proximal region of genes. The integrator complex provides a quality checkpoint during transcription elongation by driving premature transcription termination of transcripts that are unfavorably configured for transcriptional elongation: the complex terminates transcription by (1) catalyzing dephosphorylation of the C-terminal domain (CTD) of Pol II subunit POLR2A/RPB1 and SUPT5H/SPT5, (2) degrading the exiting nascent RNA transcript via endonuclease activity and (3) promoting the release of Pol II from bound DNA. The integrator complex is also involved in terminating the synthesis of non-coding Pol II transcripts, such as enhancer RNAs (eRNAs), small nuclear RNAs (snRNAs), telomerase RNAs and long non-coding RNAs (lncRNAs). Mediates recruitment of cytoplasmic dynein to the nuclear envelope, probably as component of the integrator complex. The protein is Integrator complex subunit 9 of Homo sapiens (Human).